Reading from the N-terminus, the 202-residue chain is MEIQFTNTADRISVADSVFSAAYNEPLIHQVVVAYLAGARQGTKAQKTKAEVSGGGVKPWKQKGTGRARAGSIRSPLWRTGGKIFAAKPRSYVQKVNRKMYRSALCSIFSELNRIGRFIAVNALELTEPKTKSFLKLMQDHAFGDDLLLITESENINIFLASRNLPNVTVIDVQEINPALLLKHEKVIVDKAALEKINEWLS.

A disordered region spans residues 47 to 67 (KTKAEVSGGGVKPWKQKGTGR).

It belongs to the universal ribosomal protein uL4 family. Part of the 50S ribosomal subunit.

Functionally, one of the primary rRNA binding proteins, this protein initially binds near the 5'-end of the 23S rRNA. It is important during the early stages of 50S assembly. It makes multiple contacts with different domains of the 23S rRNA in the assembled 50S subunit and ribosome. In terms of biological role, forms part of the polypeptide exit tunnel. The chain is Large ribosomal subunit protein uL4 from Dichelobacter nodosus (strain VCS1703A).